The following is a 507-amino-acid chain: ATP synthase subunit alpha, chloroplastic (507 aa).

Position 170–177 (170–177 (GDRQTGKT)) interacts with ATP.

It belongs to the ATPase alpha/beta chains family. In terms of assembly, F-type ATPases have 2 components, CF(1) - the catalytic core - and CF(0) - the membrane proton channel. CF(1) has five subunits: alpha(3), beta(3), gamma(1), delta(1), epsilon(1). CF(0) has four main subunits: a, b, b' and c.

It localises to the plastid. Its subcellular location is the chloroplast thylakoid membrane. It carries out the reaction ATP + H2O + 4 H(+)(in) = ADP + phosphate + 5 H(+)(out). Its function is as follows. Produces ATP from ADP in the presence of a proton gradient across the membrane. The alpha chain is a regulatory subunit. This Sorghum bicolor (Sorghum) protein is ATP synthase subunit alpha, chloroplastic.